We begin with the raw amino-acid sequence, 922 residues long: Isoleucine--tRNA ligase (922 aa).

The short motif at P57–H67 is the 'HIGH' region element. L-isoleucyl-5'-AMP is bound at residue E553. The short motif at K594 to S598 is the 'KMSKS' region element. K597 provides a ligand contact to ATP. C892, C895, C912, and C915 together coordinate Zn(2+).

It belongs to the class-I aminoacyl-tRNA synthetase family. IleS type 1 subfamily. In terms of assembly, monomer. Zn(2+) serves as cofactor.

It localises to the cytoplasm. The enzyme catalyses tRNA(Ile) + L-isoleucine + ATP = L-isoleucyl-tRNA(Ile) + AMP + diphosphate. In terms of biological role, catalyzes the attachment of isoleucine to tRNA(Ile). As IleRS can inadvertently accommodate and process structurally similar amino acids such as valine, to avoid such errors it has two additional distinct tRNA(Ile)-dependent editing activities. One activity is designated as 'pretransfer' editing and involves the hydrolysis of activated Val-AMP. The other activity is designated 'posttransfer' editing and involves deacylation of mischarged Val-tRNA(Ile). The polypeptide is Isoleucine--tRNA ligase (Desulfitobacterium hafniense (strain DSM 10664 / DCB-2)).